The sequence spans 2103 residues: MSVPGTPGAMEPAGEEERPPPAAEGEDDEEEVAAAAQTSGPAHGRSASSLEDADDQEEEMEAMVIGGGCCKEQELTYELQQGYRILGEFLQEKHRGLTAPFLQPLGGVATAEEEVAEGPRSGGRGGRAFPQQPGQGMCLLQMEEKFASGQYGGITEFVADFRLMLETCYRLHGVDHWISKQGQKLEMMLEQKLALLSRHLREKTTIAVTSRGYYGLEDEKGTACTSTRRRSTPRSLAGLTSGVFESIMVQVLRQEEQLRAKEEKRLREQERKEAEEASQKEIEEWERKLLAQAAPTCMETMWEIPAIGHFLCLAQQILNLPEIVFYELERCLLMPQCNAFLSKIMTSLLSPPHRRPTLHRRPTLPYRTWEAALRQKVQQWYTAVGQTENPDNCAEKLGLCPQFFKVLGEVNPLEEKPFHELPFYQKVWLLKGLCDFVYETQKEVQDAVLGQPIHECREVILGYDYLENAYVHFPQFCGADVRIYKQRPFQAPEFPIPPIKIQRVPRIKLEKLKCDYVSTSNGEHRCSRDSLPSSFKKEQENNFDPACCPAKMILDNHDISVEMGVKSNYEIRIRRPCEIKKTDCCKENLEKPRSPGEVTGFGEPLSPGEIRFIENQEKYGEASRIKIEPSPLKENTLKSCQIHVNGSHSDHPEINCHKVVRDILLEQSLQSHKKLKLTKMRAKKKKKKKKKLKDVLNENLQRKREGLHSLAFKSYKPEIQNKLLIIKKKAKHKKHKSGKKSVSKKAITKKRKTVIKSPTVPEFQLICTNLDELRELITKIENELKDLENSRKKSGKWYHRRQAVKELHSTLIRLLNELLPWEPKLMKAFQRNRSRLKKDYDDFRRQPDHDTFNRELWTTDEGEGDLGKDSPKGEISKSIDSTEPLDILEKDHFDSDDMKLSEIDFPMARSKLLKKELPSKDLPKTLLKTLKRQSKQTDYVDDSTKELSPRKKAKLSTNETTVENLESDVQIDCFSESKHTEPSFPESFASLDSVPVSTLQKGTKPIQALLAKNIGNKVTLTNQLPPSTGRNALAVEKPVLSPPEASPIKPALTCHTNTKGPLQMVYKMPCGQWLPIDLQNSSVKIQVQPMVDPKTGEKIMQQVLILPKNFVIQHKEGKAVAKEVPPLQQKGTEQHCSSFPQTTNINSSLASVFVNSPGTVSTQLPNTAFNKTITPLSNISSARPQPLSPVTSVSNLLTPSVKTSQSEAGKAKNAVSAATFSLPSASPTISSTGQPLSSTTTLNGSTNPGSSFNCFAQQTADSSEAKQELKTVCIRDSQSILVRTRGGNTGVVKVQTNPDQNSPNTVSSSSVFTFAPQLQAFLVPKSTTSSSAFSPVAGTTTTSSLSPFSQTPTSVSIPASFAPSMGKNLKLTLGHTTGSGDLGHVIDKTSHMPSSPLKSSICSSTLLPSTTSSSVSVISISAANFGQNNANIIHTPTKQQQVDYITKSYPVTRSEATAATNGDVISGTPVQKLMLVSAPSILSSGNGTAINMTPALTSTGVSAQKLVFINAPVPSGTSTPTLVAESLKQTLPPPLHKAYVKTPEQPQIVLIPSTVGTPIKINSSPAVSQIKDVKIGLNIGQAIVNTSGTVPAIPSINILQNVTPKGEDKSSKGYILPLSTSGNSVPVSSNFVSQNITPVNESVVSSARAVNVLSVTGANLSLGSFPVTSASASAGAQPPVLVSGNDTSSRIMPILSNRLCSSSLGNTVAISTVKTGHLASSVLISTTQPVVSPKCLTSALQIPVTVALPTPATTSPKIINTVPHSAAVPGATRSVSISKRQSRTSLQFHSPGISTTVPTNVNTNKPQTELSSLSTSPGKITNTSNFASLPNQQALVKTPSYSSAPGGTTIHTASAPSNVTSLVGSQFSEPCIQQKIVINTSTPLAPGTQIMINGTRFIVPPQGLGAGSHVLLISTNPKYGAPLVLNSGQGIQSTPIDNSAQKITLASNNSLSGQPLQHPLRSPTKFINSFGNASSIPTVHTSPQLINTTAKVPVPPPVPTVSLTSVIKSPATLLAKTSLVSAICPSNPPLPSSTSVFHLDPPVKKLLVSPEGAILNTINTPASKVSSLSPSLSQIVVSASRSPASVFPAFQSSGLEKPDRAAS.

Over residues 1–12 (MSVPGTPGAMEP) the composition is skewed to low complexity. Positions 1 to 61 (MSVPGTPGAM…DADDQEEEME (61 aa)) are disordered. Residues 51–61 (EDADDQEEEME) are compositionally biased toward acidic residues. The region spanning 77-196 (YELQQGYRIL…MMLEQKLALL (120 aa)) is the Bromo domain. 5 disordered regions span residues 730-750 (AKHKKHKSGKKSVSKKAITKK), 853-881 (NRELWTTDEGEGDLGKDSPKGEISKSIDS), 933-956 (QSKQTDYVDDSTKELSPRKKAKLS), 1224-1244 (SASPTISSTGQPLSSTTTLNG), and 1770-1817 (GATR…STSP). Positions 865–877 (DLGKDSPKGEISK) are enriched in basic and acidic residues. The span at 1224–1234 (SASPTISSTGQ) shows a compositional bias: polar residues. Residues 1235-1244 (PLSSTTTLNG) show a composition bias toward low complexity. Polar residues predominate over residues 1773-1794 (RSVSISKRQSRTSLQFHSPGIS). Residues 1795-1808 (TTVPTNVNTNKPQT) show a composition bias toward low complexity.

The protein localises to the nucleus. This is an uncharacterized protein from Homo sapiens (Human).